The primary structure comprises 209 residues: MSKQKHSASSTRWLKEHFDDKYVNEAKKKGYRSRAIFKIEEIQNKDKLLKAGMTVVDLGAAPGGWSQFAAKVVGEGGRVIACDLLPMESIAGVSFLQGDFREEAVLNALLDRIQPDMVDVVMSDMAPNMAGNLSVDQPRAMYLVELALDMCRQVLAPNGSFVVKVFQGEGFDDYVKAVRDLFKVVKIRKPDSSRSRSREVFIVATGYKG.

S-adenosyl-L-methionine-binding residues include Gly63, Trp65, Asp83, Asp99, and Asp124. Lys164 (proton acceptor) is an active-site residue.

This sequence belongs to the class I-like SAM-binding methyltransferase superfamily. RNA methyltransferase RlmE family.

It is found in the cytoplasm. The enzyme catalyses uridine(2552) in 23S rRNA + S-adenosyl-L-methionine = 2'-O-methyluridine(2552) in 23S rRNA + S-adenosyl-L-homocysteine + H(+). Functionally, specifically methylates the uridine in position 2552 of 23S rRNA at the 2'-O position of the ribose in the fully assembled 50S ribosomal subunit. This chain is Ribosomal RNA large subunit methyltransferase E, found in Vibrio cholerae serotype O1 (strain ATCC 39541 / Classical Ogawa 395 / O395).